A 190-amino-acid chain; its full sequence is Ribosome maturation factor RimM (190 aa).

One can recognise a PRC barrel domain in the interval 114 to 190 (DDEYYWVDLI…CITVDWQPDY (77 aa)).

The protein belongs to the RimM family. Binds ribosomal protein uS19.

Its subcellular location is the cytoplasm. Its function is as follows. An accessory protein needed during the final step in the assembly of 30S ribosomal subunit, possibly for assembly of the head region. Essential for efficient processing of 16S rRNA. May be needed both before and after RbfA during the maturation of 16S rRNA. It has affinity for free ribosomal 30S subunits but not for 70S ribosomes. The sequence is that of Ribosome maturation factor RimM from Acidovorax sp. (strain JS42).